Consider the following 367-residue polypeptide: UDP-galactopyranose mutase (367 aa).

FAD contacts are provided by residues Phe12, 31–32 (EK), Asn39, and 56–57 (HI). Phe12 provides a ligand contact to UDP-alpha-D-galactose. UDP-alpha-D-galactose contacts are provided by Asn80, Thr152, Trp156, and Tyr181. Residue 212-213 (DF) participates in FAD binding. 3 residues coordinate UDP-alpha-D-galactose: Asn268, Arg278, and Tyr311. Residue Arg340 coordinates FAD. Residue Tyr346 coordinates UDP-alpha-D-galactose. 347–352 (YDMHQV) contributes to the FAD binding site.

In terms of assembly, homodimer. It depends on FAD as a cofactor.

The enzyme catalyses UDP-alpha-D-galactose = UDP-alpha-D-galactofuranose. It functions in the pathway bacterial outer membrane biogenesis; lipopolysaccharide biosynthesis. Catalyzes the interconversion through a 2-keto intermediate of uridine diphosphogalactopyranose (UDP-GalP) into uridine diphosphogalactofuranose (UDP-GalF). The polypeptide is UDP-galactopyranose mutase (glf) (Escherichia coli (strain K12)).